Reading from the N-terminus, the 145-residue chain is uncharacterized protein (145 aa).

Residues V97 and N121 each contribute to the substrate site.

Belongs to the D-isomer specific 2-hydroxyacid dehydrogenase family. FDH subfamily.

This is an uncharacterized protein from Saccharomyces cerevisiae (strain ATCC 204508 / S288c) (Baker's yeast).